Here is a 199-residue protein sequence, read N- to C-terminus: NADH-quinone oxidoreductase subunit C (199 aa).

It belongs to the complex I 30 kDa subunit family. As to quaternary structure, NDH-1 is composed of 14 different subunits. Subunits NuoB, C, D, E, F, and G constitute the peripheral sector of the complex.

The protein resides in the cell inner membrane. It catalyses the reaction a quinone + NADH + 5 H(+)(in) = a quinol + NAD(+) + 4 H(+)(out). Its function is as follows. NDH-1 shuttles electrons from NADH, via FMN and iron-sulfur (Fe-S) centers, to quinones in the respiratory chain. The immediate electron acceptor for the enzyme in this species is believed to be ubiquinone. Couples the redox reaction to proton translocation (for every two electrons transferred, four hydrogen ions are translocated across the cytoplasmic membrane), and thus conserves the redox energy in a proton gradient. This chain is NADH-quinone oxidoreductase subunit C, found in Paramagnetospirillum magneticum (strain ATCC 700264 / AMB-1) (Magnetospirillum magneticum).